We begin with the raw amino-acid sequence, 504 residues long: Maturase K (504 aa).

It belongs to the intron maturase 2 family. MatK subfamily.

It localises to the plastid. The protein resides in the chloroplast. In terms of biological role, usually encoded in the trnK tRNA gene intron. Probably assists in splicing its own and other chloroplast group II introns. The sequence is that of Maturase K from Pentaplaris doroteae.